A 444-amino-acid polypeptide reads, in one-letter code: Beta-D-glucosyl crocetin beta-1,6-glucosyltransferase (444 aa).

His9 (proton acceptor) is an active-site residue. His9 contributes to the an anthocyanidin binding site. The active-site Charge relay is Asp108. UDP-alpha-D-glucose is bound by residues Thr130, Ala319, Gln321, His336, Trp339, Asn340, Ser341, Glu344, Asp360, and Gln361.

Belongs to the UDP-glycosyltransferase family. As to expression, ubiquitous.

The enzyme catalyses beta-D-glucosyl crocetin + UDP-alpha-D-glucose = beta-D-gentiobiosyl crocetin + UDP + H(+). The catalysed reaction is bis(beta-D-glucosyl) crocetin + UDP-alpha-D-glucose = beta-D-gentiobiosyl beta-D-glucosyl crocetin + UDP + H(+). It carries out the reaction beta-D-gentiobiosyl beta-D-glucosyl crocetin + UDP-alpha-D-glucose = bis(beta-D-gentiobiosyl) crocetin + UDP + H(+). In terms of biological role, glucosyltransferase catalyzing the beta 1-6 glucosylation of the sugar moiety of crocetin glucosyl esters to produce crocetin gentiobiosyl esters. Weak activity toward curcumin glucosides, but no activity with flavonoid glucosides, coumarin glucosides, 4-nitrophenyl glucoside or crocetin. Involved with UGT75L6 in sequential glycosylation of crocetin to crocin (bis(beta-D-gentiobiosyl) crocetin). The chain is Beta-D-glucosyl crocetin beta-1,6-glucosyltransferase (UGT94E5) from Gardenia jasminoides (Cape jasmine).